Reading from the N-terminus, the 265-residue chain is Eukaryotic translation initiation factor 3 subunit J (265 aa).

Over residues 24–34 (AGDEPILDSWD) the composition is skewed to acidic residues. The disordered stretch occupies residues 24–74 (AGDEPILDSWDEEPKAKKEAAKPKPKPKAGGKKNAKGEEKKEQVLAIDELD). Over residues 35-45 (EEPKAKKEAAK) the composition is skewed to basic and acidic residues. Residues 46–57 (PKPKPKAGGKKN) show a composition bias toward basic residues. Coiled coils occupy residues 78-106 (RKEL…MAEE) and 190-220 (IENI…ARVK).

This sequence belongs to the eIF-3 subunit J family. In terms of assembly, component of the eukaryotic translation initiation factor 3 (eIF-3) complex.

The protein localises to the cytoplasm. Its function is as follows. Component of the eukaryotic translation initiation factor 3 (eIF-3) complex, which is involved in protein synthesis of a specialized repertoire of mRNAs and, together with other initiation factors, stimulates binding of mRNA and methionyl-tRNAi to the 40S ribosome. The eIF-3 complex specifically targets and initiates translation of a subset of mRNAs involved in cell proliferation. In Candida glabrata (strain ATCC 2001 / BCRC 20586 / JCM 3761 / NBRC 0622 / NRRL Y-65 / CBS 138) (Yeast), this protein is Eukaryotic translation initiation factor 3 subunit J.